A 329-amino-acid chain; its full sequence is Putative HTH-type transcriptional regulatory protein APE_0778 (329 aa).

One can recognise an HTH cro/C1-type domain in the interval 142–200 (LREKRLEKGLSLGHLAYMLKTSRKSIYEYERGVMSPSVEKAEKLVDILGEEILEPIDIL). A DNA-binding region (H-T-H motif) is located at residues 153–172 (LGHLAYMLKTSRKSIYEYER).

In Aeropyrum pernix (strain ATCC 700893 / DSM 11879 / JCM 9820 / NBRC 100138 / K1), this protein is Putative HTH-type transcriptional regulatory protein APE_0778.